The sequence spans 371 residues: Vasopressin V2 receptor (371 aa).

Topologically, residues 1–38 (MLLVSTVSAVPGLFSPPSSPSNSSQEELLDDRDPLLVR) are extracellular. N22 carries N-linked (GlcNAc...) asparagine glycosylation. A helical transmembrane segment spans residues 39-63 (AELALLSTIFVAVALSNGLVLGALI). Residues 64-77 (RRGRRGRWAPMHVF) lie on the Cytoplasmic side of the membrane. Residues 78–98 (ISHLCLADLAVALFQVLPQLA) traverse the membrane as a helical segment. At 99–113 (WDATDRFHGPDALCR) the chain is on the extracellular side. Residues 114-135 (AVKYLQMVGMYASSYMILAMTL) traverse the membrane as a helical segment. Topologically, residues 136-159 (DRHRAICRPMLAYRHGGGARWNRP) are cytoplasmic. The helical transmembrane segment at 160-180 (VLVAWAFSLLLSLPQLFIFAQ) threads the bilayer. Topologically, residues 181 to 200 (RDVGNGSGVFDCWARFAEPW) are extracellular. N185 carries N-linked (GlcNAc...) asparagine glycosylation. The helical transmembrane segment at 201–220 (GLRAYVTWIALMVFVAPALG) threads the bilayer. Topologically, residues 221–271 (IAACQVLIFREIHASLVPGPSERAGRRRRGRRTGSPSEGAHVSAAMAKTVR) are cytoplasmic. Residues 240 to 260 (PSERAGRRRRGRRTGSPSEGA) are disordered. The chain crosses the membrane as a helical span at residues 272-293 (MTLVIVIVYVLCWAPFFLVQLW). The Extracellular portion of the chain corresponds to 294 to 308 (AAWDPEAPLERPPFV). A helical membrane pass occupies residues 309 to 328 (LLMLLASLNSCTNPWIYASF). Topologically, residues 329–371 (SSSVSSELRSLLCCAQRHTTHSLGPQDESCATASSSLMKDTPS) are cytoplasmic. 2 S-palmitoyl cysteine lipidation sites follow: C341 and C342. The disordered stretch occupies residues 349–371 (HSLGPQDESCATASSSLMKDTPS). A compositionally biased stretch (polar residues) spans 357 to 371 (SCATASSSLMKDTPS).

The protein belongs to the G-protein coupled receptor 1 family. Vasopressin/oxytocin receptor subfamily. In terms of assembly, interacts with ARRDC4. Identified in a complex containing at least ARRDC4, V2R and HGS. Interacts with TMEM147. In terms of tissue distribution, kidney.

Its subcellular location is the cell membrane. Functionally, receptor for arginine vasopressin. The activity of this receptor is mediated by G proteins which activate adenylate cyclase. Involved in renal water reabsorption. This is Vasopressin V2 receptor (Avpr2) from Rattus norvegicus (Rat).